The primary structure comprises 255 residues: Trypsin alpha-4 (255 aa).

A signal peptide spans 1-16 (MLKFVVLLCAISCALG). The propeptide at 17 to 30 (AAVPEGMVPQLDGR) is activation peptide. The 223-residue stretch at 31–253 (IVGGVATTIS…LRTWVVSAAS (223 aa)) folds into the Peptidase S1 domain. Residues cysteine 56 and cysteine 72 are joined by a disulfide bond. Catalysis depends on charge relay system residues histidine 71 and aspartate 116. 2 cysteine pairs are disulfide-bonded: cysteine 179-cysteine 196 and cysteine 205-cysteine 229. The active-site Charge relay system is the serine 209.

The protein belongs to the peptidase S1 family.

It localises to the secreted. The protein resides in the extracellular space. The catalysed reaction is Preferential cleavage: Arg-|-Xaa, Lys-|-Xaa.. The polypeptide is Trypsin alpha-4 (Lucilia cuprina (Green bottle fly)).